Here is a 612-residue protein sequence, read N- to C-terminus: Oligopeptide transport ATP-binding protein OppD (612 aa).

One can recognise an ABC transporter 1 domain in the interval 5 to 255 (LEVTDLAVTF…RRMPYTVGLL (251 aa)). Residues Ser-43, Gly-44, Ser-45, Gly-46, Lys-47, Ser-48, Ala-49, Tyr-61, Gln-96, Arg-147, Gly-158, Glu-159, and His-213 each contribute to the ATP site. Residues Cys-286, Cys-292, Cys-299, and Cys-317 each contribute to the [4Fe-4S] cluster site. One can recognise an ABC transporter 2 domain in the interval 350-600 (VRVRHLVKTY…PKHEYTRRLL (251 aa)). Positions 396, 397, 398, 399, 400, 401, 402, 445, 495, 499, 503, and 558 each coordinate ATP.

It belongs to the ABC transporter superfamily. As to quaternary structure, the complex is composed of an ATP-binding protein (OppD), two transmembrane proteins (OppB and OppC) and a solute-binding protein (OppA).

Its subcellular location is the cell inner membrane. It catalyses the reaction a [peptide](out) + ATP + H2O = a [peptide](in) + ADP + phosphate + H(+). Its function is as follows. Part of the ABC transporter complex OppABCD involved in the uptake of oligopeptides. Responsible for energy coupling to the transport system. This is Oligopeptide transport ATP-binding protein OppD from Mycobacterium bovis (strain ATCC BAA-935 / AF2122/97).